The following is a 146-amino-acid chain: Antiholin-like protein LrgA (146 aa).

4 helical membrane-spanning segments follow: residues 7–29, 34–53, 65–87, and 97–119; these read YGFLTQAFIFAVIMLVSNMIAAI, IPASVVGLVLLFLLLCLKVI, LTSLIGFLFVPSGISVMNSLGVM, and VILLATIILLGATGLFSQLILSL.

It belongs to the CidA/LrgA family. LrgA subfamily.

It is found in the cell membrane. Functionally, inhibits the expression or activity of extracellular murein hydrolases by interacting, possibly with LrgB, with the holin-like protein CidA. The LrgAB and CidA proteins may affect the proton motive force of the membrane. May be involved in programmed cell death (PCD), possibly triggering PCD in response to antibiotics and environmental stresses. This chain is Antiholin-like protein LrgA, found in Bacillus subtilis (strain 168).